We begin with the raw amino-acid sequence, 119 residues long: uncharacterized protein (119 aa).

Positions 63–104 (KKIKKELESNSEKRKAALQMIKEEHTAKVDRYKMIIEDLRQQ) form a coiled coil.

This is an uncharacterized protein from Bacillus subtilis (strain 168).